The chain runs to 106 residues: Small ribosomal subunit protein bS6 (106 aa).

This sequence belongs to the bacterial ribosomal protein bS6 family.

In terms of biological role, binds together with bS18 to 16S ribosomal RNA. The polypeptide is Small ribosomal subunit protein bS6 (Cyanothece sp. (strain PCC 7425 / ATCC 29141)).